Reading from the N-terminus, the 311-residue chain is Porphobilinogen deaminase (311 aa).

At Cys-241 the chain carries S-(dipyrrolylmethanemethyl)cysteine.

Belongs to the HMBS family. As to quaternary structure, monomer. It depends on dipyrromethane as a cofactor.

It catalyses the reaction 4 porphobilinogen + H2O = hydroxymethylbilane + 4 NH4(+). It participates in porphyrin-containing compound metabolism; protoporphyrin-IX biosynthesis; coproporphyrinogen-III from 5-aminolevulinate: step 2/4. Its function is as follows. Tetrapolymerization of the monopyrrole PBG into the hydroxymethylbilane pre-uroporphyrinogen in several discrete steps. This Shouchella clausii (strain KSM-K16) (Alkalihalobacillus clausii) protein is Porphobilinogen deaminase.